The primary structure comprises 210 residues: Hydrogenase expression/formation protein HupD (210 aa).

Ni(2+)-binding residues include Glu22, Asp68, and His99.

The protein belongs to the peptidase A31 family.

In terms of biological role, not known. Could be involved in the processing of hydrogenase. The chain is Hydrogenase expression/formation protein HupD (hupD) from Rhodobacter capsulatus (Rhodopseudomonas capsulata).